We begin with the raw amino-acid sequence, 728 residues long: Elongation factor 2 (728 aa).

In terms of domain architecture, tr-type G spans 18–258; that stretch reads KFIRNIGIVA…MVIRHLPSPI (241 aa). GTP is bound by residues 27–34, 93–97, and 147–150; these read AHIDHGKT, DTPGH, and NKVD. A Diphthamide modification is found at histidine 594.

The protein belongs to the TRAFAC class translation factor GTPase superfamily. Classic translation factor GTPase family. EF-G/EF-2 subfamily.

The protein resides in the cytoplasm. Catalyzes the GTP-dependent ribosomal translocation step during translation elongation. During this step, the ribosome changes from the pre-translocational (PRE) to the post-translocational (POST) state as the newly formed A-site-bound peptidyl-tRNA and P-site-bound deacylated tRNA move to the P and E sites, respectively. Catalyzes the coordinated movement of the two tRNA molecules, the mRNA and conformational changes in the ribosome. This Archaeoglobus fulgidus (strain ATCC 49558 / DSM 4304 / JCM 9628 / NBRC 100126 / VC-16) protein is Elongation factor 2 (fusA).